The following is a 356-amino-acid chain: Phospho-N-acetylmuramoyl-pentapeptide-transferase (356 aa).

10 consecutive transmembrane segments (helical) span residues threonine 25 to alanine 45, glycine 70 to tryptophan 90, leucine 93 to phenylalanine 113, phenylalanine 138 to leucine 158, tyrosine 164 to glycine 184, glycine 195 to cysteine 215, leucine 235 to proline 255, alanine 258 to valine 278, isoleucine 284 to valine 304, and glutamine 333 to leucine 353.

This sequence belongs to the glycosyltransferase 4 family. MraY subfamily. Mg(2+) serves as cofactor.

The protein resides in the cell inner membrane. It catalyses the reaction UDP-N-acetyl-alpha-D-muramoyl-L-alanyl-gamma-D-glutamyl-meso-2,6-diaminopimeloyl-D-alanyl-D-alanine + di-trans,octa-cis-undecaprenyl phosphate = di-trans,octa-cis-undecaprenyl diphospho-N-acetyl-alpha-D-muramoyl-L-alanyl-D-glutamyl-meso-2,6-diaminopimeloyl-D-alanyl-D-alanine + UMP. It functions in the pathway cell wall biogenesis; peptidoglycan biosynthesis. Functionally, catalyzes the initial step of the lipid cycle reactions in the biosynthesis of the cell wall peptidoglycan: transfers peptidoglycan precursor phospho-MurNAc-pentapeptide from UDP-MurNAc-pentapeptide onto the lipid carrier undecaprenyl phosphate, yielding undecaprenyl-pyrophosphoryl-MurNAc-pentapeptide, known as lipid I. The sequence is that of Phospho-N-acetylmuramoyl-pentapeptide-transferase from Bartonella tribocorum (strain CIP 105476 / IBS 506).